The sequence spans 450 residues: Glutamate--tRNA ligase 1 (450 aa).

The 'HIGH' region motif lies at 7–17; that stretch reads PSPTGYMHVGN. Residues 236–240 carry the 'KMSKS' region motif; that stretch reads KISKR. An ATP-binding site is contributed by lysine 239.

The protein belongs to the class-I aminoacyl-tRNA synthetase family. Glutamate--tRNA ligase type 1 subfamily. As to quaternary structure, monomer.

The protein localises to the cytoplasm. The enzyme catalyses tRNA(Glu) + L-glutamate + ATP = L-glutamyl-tRNA(Glu) + AMP + diphosphate. Functionally, catalyzes the attachment of glutamate to tRNA(Glu) in a two-step reaction: glutamate is first activated by ATP to form Glu-AMP and then transferred to the acceptor end of tRNA(Glu). In Anaplasma phagocytophilum (strain HZ), this protein is Glutamate--tRNA ligase 1.